Consider the following 798-residue polypeptide: MLQNVTPHKLPGEGNAGLLGLGPEAAAPGKRIRKPSLLYEGFESPTMASVPALQLAPANPPPPEVSNPKKPGRVTNQLQYLHKVVMKALWKHQFAWPFRQPVDAVKLGLPDYHKIIKQPMDMGTIKRRLENNYYWAASECMQDFNTMFTNCYIYNKPTDDIVLMAQTLEKIFLQKVASMPQEEQELVVTIPKNSHKKGAKLAALQGSITSAHQVPAVSSVSHTALYTPPPEIPTTVLNIPHPSVISSPLLKSLHSAGPPLLAVSAAPPAQPLAKKKGVKRKADTTTPTPTAILAPGSPASPPGSLEPKAARLPPMRRESGRPIKPPRKDLPDSQQQHQSSKKGKLSEQLKHCNGILKELLSKKHAAYAWPFYKPVDASALGLHDYHDIIKHPMDLSTVKRKMENRDYRDAQEFAADVRLMFSNCYKYNPPDHDVVAMARKLQDVFEFRYAKMPDEPLEPGPLPVSTALPPGLAKSSSESSSEESSSESSSEEEEEEDEEDEEEESESSDSEEERAHRLAELQEQLRAVHEQLAALSQGPISKPKRKREKKEKKKKRKAEKHRGRIGIDEDDKGPRAPRPLQPKKSKKAGGGGSNATTLSHPGFGTSAGSSNKLPKKAQKTAPPVLPTGYDSEEEEESRPMSYDEKRQLSLDINKLPGEKLGRVVHIIQAREPSLRDSNPEEIEIDFETLKPSTLRELERYVLSCLRKKPRKPYTIRKPVGKTKEELALEKKRELEKRLQDVSGQLNSTKKPPKKASEKTESSAQQVAVSRLSASSSSSDSSSSSSSSSSSDTSDSDSG.

M1 carries the N-acetylmethionine modification. A disordered region spans residues 1–21; it reads MLQNVTPHKLPGEGNAGLLGL. T6 is modified (phosphothreonine). S36 carries the phosphoserine modification. The tract at residues 53–72 is disordered; sequence LQLAPANPPPPEVSNPKKPG. The Bromo 1 domain maps to 73 to 179; it reads RVTNQLQYLH…KIFLQKVASM (107 aa). A protein-binding residues include D111, Y154, N155, K156, D159, and D160. 3 disordered regions span residues 267–348, 455–648, and 735–798; these read PPAQ…LSEQ, EPLE…KRQL, and EKRL…SDSG. The segment covering 284-297 has biased composition (low complexity); it reads TTTPTPTAILAPGS. Residues S297, S300, and S304 each carry the phosphoserine modification. The span at 315–331 shows a compositional bias: basic and acidic residues; that stretch reads MRRESGRPIKPPRKDLP. In terms of domain architecture, Bromo 2 spans 343–452; the sequence is GKLSEQLKHC…DVFEFRYAKM (110 aa). Positions 480–512 are enriched in acidic residues; that stretch reads SSEESSSESSSEEEEEEDEEDEEEESESSDSEE. The segment covering 542–564 has biased composition (basic residues); it reads KPKRKREKKEKKKKRKAEKHRGR. The Nuclear localization signal signature appears at 553-557; sequence KKKRK. Residues 630-712 form the NET domain; sequence DSEEEEESRP…SCLRKKPRKP (83 aa). Residue S631 is modified to Phosphoserine. Residues 637-648 are compositionally biased toward basic and acidic residues; the sequence is SRPMSYDEKRQL. Residues 772–792 are compositionally biased toward low complexity; sequence SASSSSSDSSSSSSSSSSSDT.

Belongs to the BET family. As to quaternary structure, homodimer. Interacts with E2F1. Interacts with (acetylated) STAT3; promoting STAT3 recruitment to chromatin. Interacts with CTCF; promoting BRD2 recruitment to chromatin.

The protein localises to the nucleus. The protein resides in the chromosome. In terms of biological role, chromatin reader protein that specifically recognizes and binds histone H4 acetylated at 'Lys-5' and 'Lys-12' (H4K5ac and H4K12ac, respectively), thereby controlling gene expression and remodeling chromatin structures. Recruits transcription factors and coactivators to target gene sites, and activates RNA polymerase II machinery for transcriptional elongation. Plays a key role in genome compartmentalization via its association with CTCF and cohesin: recruited to chromatin by CTCF and promotes formation of topologically associating domains (TADs) via its ability to bind acetylated histones, contributing to CTCF boundary formation and enhancer insulation. Also recognizes and binds acetylated non-histone proteins, such as STAT3. Involved in inflammatory response by regulating differentiation of naive CD4(+) T-cells into T-helper Th17: recognizes and binds STAT3 acetylated at 'Lys-87', promoting STAT3 recruitment to chromatin. In addition to acetylated lysines, also recognizes and binds lysine residues on histones that are both methylated and acetylated on the same side chain to form N6-acetyl-N6-methyllysine (Kacme), an epigenetic mark of active chromatin associated with increased transcriptional initiation. Specifically binds histone H4 acetyl-methylated at 'Lys-5' and 'Lys-12' (H4K5acme and H4K12acme, respectively). The protein is Bromodomain-containing protein 2 (Brd2) of Rattus norvegicus (Rat).